Reading from the N-terminus, the 147-residue chain is 3-dehydroquinate dehydratase (147 aa).

The Proton acceptor role is filled by Y23. N74, H80, and D87 together coordinate substrate. H100 functions as the Proton donor in the catalytic mechanism. Substrate contacts are provided by residues 101 to 102 and R111; that span reads IS.

It belongs to the type-II 3-dehydroquinase family. In terms of assembly, homododecamer.

It carries out the reaction 3-dehydroquinate = 3-dehydroshikimate + H2O. It functions in the pathway metabolic intermediate biosynthesis; chorismate biosynthesis; chorismate from D-erythrose 4-phosphate and phosphoenolpyruvate: step 3/7. Functionally, catalyzes a trans-dehydration via an enolate intermediate. This is 3-dehydroquinate dehydratase from Bacillus pumilus (strain SAFR-032).